A 324-amino-acid chain; its full sequence is Annexin A3 (324 aa).

4 Annexin repeats span residues 19–90 (FNPS…ALIT), 91–162 (APAV…TLAD), 174–246 (HLAK…AVVR), and 250–321 (NTPA…KICG). Lys-178 is modified (N6-acetyllysine). Thr-268 is subject to Phosphothreonine.

This sequence belongs to the annexin family.

Inhibitor of phospholipase A2, also possesses anti-coagulant properties. The sequence is that of Annexin A3 (Anxa3) from Rattus norvegicus (Rat).